The following is a 393-amino-acid chain: MLTIGTALRPGATRVMLLGAGELGKEVAIECQRLGLEVIAVDRYADAPAMHVAHRSHVINMLDGAALKQLVAQEKPHYIVPEIEAIATDMLVELEKMGQHVVPCAEATRLTMNREGIRRLAAETLQLPTSSYRFADTDSAFFQAVRDIGYPCIVKPVMSSSGKGQSLIRSEEHLQAAWEYAQQGGRAGSGRVIIEGLVHFDFEITLLTIRAVDGIHFCAPIGHRQEDGDYRESWQPQAMSDIALQRAKEISAQVVTALGGFGLFGVELFVCGDDVIFSEVSPRPHDTGMVTLISQNMSEFALHVRAFLGLPIGTIRQYGAAASAVILPELTSQNITYRGLETALIGDTQIRLFGKPEIAGQRRLGVALAVADNIETAIEVAKKAAGNIEVSGE.

N(1)-(5-phospho-beta-D-ribosyl)glycinamide-binding positions include 22-23 and Glu82; that span reads EL. ATP-binding positions include Arg114, Lys155, 160–165, 195–198, and Glu203; these read SSGKGQ and EGLV. One can recognise an ATP-grasp domain in the interval 119-308; that stretch reads RLAAETLQLP…EFALHVRAFL (190 aa). Mg(2+)-binding residues include Glu267 and Glu279. N(1)-(5-phospho-beta-D-ribosyl)glycinamide-binding positions include Asp286, Lys355, and 362–363; that span reads RR.

It belongs to the PurK/PurT family. Homodimer.

It catalyses the reaction N(1)-(5-phospho-beta-D-ribosyl)glycinamide + formate + ATP = N(2)-formyl-N(1)-(5-phospho-beta-D-ribosyl)glycinamide + ADP + phosphate + H(+). It participates in purine metabolism; IMP biosynthesis via de novo pathway; N(2)-formyl-N(1)-(5-phospho-D-ribosyl)glycinamide from N(1)-(5-phospho-D-ribosyl)glycinamide (formate route): step 1/1. Involved in the de novo purine biosynthesis. Catalyzes the transfer of formate to 5-phospho-ribosyl-glycinamide (GAR), producing 5-phospho-ribosyl-N-formylglycinamide (FGAR). Formate is provided by PurU via hydrolysis of 10-formyl-tetrahydrofolate. This chain is Formate-dependent phosphoribosylglycinamide formyltransferase, found in Yersinia pseudotuberculosis serotype IB (strain PB1/+).